The sequence spans 515 residues: Bifunctional purine biosynthesis protein PurH (515 aa).

Residues 1-145 (MTKRALISVS…KNHASVTVVV (145 aa)) form the MGS-like domain.

Belongs to the PurH family.

It catalyses the reaction (6R)-10-formyltetrahydrofolate + 5-amino-1-(5-phospho-beta-D-ribosyl)imidazole-4-carboxamide = 5-formamido-1-(5-phospho-D-ribosyl)imidazole-4-carboxamide + (6S)-5,6,7,8-tetrahydrofolate. The catalysed reaction is IMP + H2O = 5-formamido-1-(5-phospho-D-ribosyl)imidazole-4-carboxamide. Its pathway is purine metabolism; IMP biosynthesis via de novo pathway; 5-formamido-1-(5-phospho-D-ribosyl)imidazole-4-carboxamide from 5-amino-1-(5-phospho-D-ribosyl)imidazole-4-carboxamide (10-formyl THF route): step 1/1. The protein operates within purine metabolism; IMP biosynthesis via de novo pathway; IMP from 5-formamido-1-(5-phospho-D-ribosyl)imidazole-4-carboxamide: step 1/1. In Streptococcus thermophilus (strain ATCC BAA-491 / LMD-9), this protein is Bifunctional purine biosynthesis protein PurH.